A 263-amino-acid chain; its full sequence is Fructose-bisphosphate aldolase class 1 (263 aa).

Residues 24–25, His29, Asp33, and Trp144 contribute to the substrate site; that span reads DH. Tyr146 serves as the catalytic Proton donor. Substrate is bound by residues Arg148, 177–179, 202–204, and 231–232; these read KIK, SGG, and GR. Lys177 functions as the Schiff-base intermediate with dihydroxyacetone-P in the catalytic mechanism.

This sequence belongs to the DeoC/FbaB aldolase family. In terms of assembly, homodecamer (dimer of pentamers).

The protein resides in the cytoplasm. It carries out the reaction beta-D-fructose 1,6-bisphosphate = D-glyceraldehyde 3-phosphate + dihydroxyacetone phosphate. With respect to regulation, activated by citrate. Catalyzes the reversible cleavage of fructose 1,6-bisphosphate (FBP) to glyceraldehyde 3-phosphate (GAP) and dihydroxyacetone phosphate (DHAP). The sequence is that of Fructose-bisphosphate aldolase class 1 (fba) from Thermoproteus tenax (strain ATCC 35583 / DSM 2078 / JCM 9277 / NBRC 100435 / Kra 1).